The chain runs to 584 residues: Poly(A) RNA polymerase protein 2 (584 aa).

A compositionally biased stretch (polar residues) spans 1 to 11; it reads MGAKSVTASSS. 2 disordered regions span residues 1 to 63 and 81 to 147; these read MGAK…LPKD and EGFD…QELE. Residues 12-35 show a composition bias toward basic residues; sequence KKIKNRHNGKVKKSKKIKKVRKPQ. The span at 53-63 shows a compositional bias: basic and acidic residues; it reads NEQETNKLPKD. Over residues 130 to 139 the composition is skewed to acidic residues; that stretch reads SEDEQAEQEE. 2 residues coordinate Mg(2+): aspartate 236 and aspartate 238. Positions 301, 326, 431, and 435 each coordinate ATP. In terms of domain architecture, PAP-associated spans 371-431; that stretch reads NLGVLLIEFF…AIQDPGDESN (61 aa). A disordered region spans residues 525–584; that stretch reads TSTATATTTDDDYEITNPPAKKAKIEEKPESEPAKRNSGETYITVSSEDDDEDGYNPYTL. Basic and acidic residues predominate over residues 547–562; that stretch reads AKIEEKPESEPAKRNS.

This sequence belongs to the DNA polymerase type-B-like family. As to quaternary structure, component of the TRAMP complex (also called TRF4 complex) composed of at least HUL4, MTR4, PAP2/TRF4 and either AIR1 or AIR2. Interacts with NOP53 and POL2. Interacts directly with AIR2. Mg(2+) serves as cofactor. It depends on Mn(2+) as a cofactor.

It is found in the nucleus. It carries out the reaction RNA(n) + ATP = RNA(n)-3'-adenine ribonucleotide + diphosphate. Catalytic subunit of the TRAMP complex which has a poly(A) RNA polymerase activity and is involved in a post-transcriptional quality control mechanism limiting inappropriate expression of genetic information. Polyadenylation is required for the degradative activity of the exosome on several of its nuclear RNA substrates like cryptic transcripts generated by RNA polymerase II and III, or hypomethylated pre-tRNAi-Met. Polyadenylates RNA processing and degradation intermediates of snRNAs, snoRNAs and mRNAs that accumulate in strains lacking a functional exosome. TRF4 is also required for proper nuclear division in mitosis, DNA damage repair and sister chromatid cohesion. Involved in the regulation of histone mRNA levels. May mediate mitotic chromosome condensation. The polypeptide is Poly(A) RNA polymerase protein 2 (PAP2) (Saccharomyces cerevisiae (strain ATCC 204508 / S288c) (Baker's yeast)).